Consider the following 333-residue polypeptide: Glyoxylate reductase (333 aa).

Residues 158-161 (FGRI), 180-182 (SRS), and 239-241 (IAR) each bind NADP(+). Residues Arg-241 and Glu-270 contribute to the active site. Catalysis depends on His-288, which acts as the Proton donor. 288-290 (HIG) provides a ligand contact to NADP(+).

The protein belongs to the D-isomer specific 2-hydroxyacid dehydrogenase family. GyaR subfamily. As to quaternary structure, homodimer.

It localises to the cytoplasm. The catalysed reaction is glycolate + NAD(+) = glyoxylate + NADH + H(+). This chain is Glyoxylate reductase, found in Thermococcus kodakarensis (strain ATCC BAA-918 / JCM 12380 / KOD1) (Pyrococcus kodakaraensis (strain KOD1)).